The chain runs to 154 residues: Ribosome maturation factor RimP (154 aa).

The protein belongs to the RimP family.

It localises to the cytoplasm. In terms of biological role, required for maturation of 30S ribosomal subunits. This Yersinia pseudotuberculosis serotype O:1b (strain IP 31758) protein is Ribosome maturation factor RimP.